The primary structure comprises 1046 residues: Nuclear pore complex protein NUP96 (1046 aa).

In terms of domain architecture, Peptidase S59 spans 51–187 (SPDYFLKPCI…GLWKFFVPHF (137 aa)). Over residues 283–295 (RNVRPSQKIAQRN) the composition is skewed to polar residues. Residues 283-304 (RNVRPSQKIAQRNSHQDPPPVV) are disordered. Residue Ser523 is modified to Phosphoserine.

As to quaternary structure, part of the nuclear pore complex (NPC). The NPC has an eight-fold symmetrical structure comprising a central transport channel and two rings, the cytoplasmic and nuclear rings, to which eight filaments are attached. The cytoplasmic filaments have loose ends, while the nuclear filaments are joined in a distal ring, forming a nuclear basket. NPCs are highly dynamic in configuration and composition, and can be devided in 3 subcomplexes, the NUP62 subcomplex, the NUP107-160 subcomplex and the NUP93 subcomplex, containing approximately 30 different nucleoporin proteins. As to expression, expressed in roots, leaves, stems, flowers and siliques.

The protein localises to the nucleus membrane. It localises to the nucleus. The protein resides in the nuclear pore complex. Functionally, contributes to the transfer of mature mRNA from the nucleus to the cytosol. Required for both R gene-mediated and basal disease resistance. RNA export seems to play a critical role in stress responses and regulation of plant growth and development. The chain is Nuclear pore complex protein NUP96 from Arabidopsis thaliana (Mouse-ear cress).